A 280-amino-acid polypeptide reads, in one-letter code: UPF0276 protein CC_3255 (280 aa).

It belongs to the UPF0276 family.

The chain is UPF0276 protein CC_3255 from Caulobacter vibrioides (strain ATCC 19089 / CIP 103742 / CB 15) (Caulobacter crescentus).